A 126-amino-acid chain; its full sequence is Large ribosomal subunit protein bL12 (126 aa).

It belongs to the bacterial ribosomal protein bL12 family. Homodimer. Part of the ribosomal stalk of the 50S ribosomal subunit. Forms a multimeric L10(L12)X complex, where L10 forms an elongated spine to which 2 to 4 L12 dimers bind in a sequential fashion. Binds GTP-bound translation factors.

Functionally, forms part of the ribosomal stalk which helps the ribosome interact with GTP-bound translation factors. Is thus essential for accurate translation. In Koribacter versatilis (strain Ellin345), this protein is Large ribosomal subunit protein bL12.